A 364-amino-acid chain; its full sequence is Homeobox protein KNOX3 (364 aa).

Residues 13–49 (TAHGQHHSQLPWGSSPLSAVISPPPQQQQQHQQQSAG) are disordered. The segment covering 19 to 29 (HSQLPWGSSPL) has biased composition (polar residues). Residues 246 to 266 (ELKHHLLKKYSGYLSSLKQEL) form the ELK domain. The segment at residues 267–330 (SKKKKKGKLP…NQRKRHWKPT (64 aa)) is a DNA-binding region (homeobox; TALE-type).

Belongs to the TALE/KNOX homeobox family. In terms of assembly, binds DNA as a monomer. As to expression, the unit of inflorescence is the spikelet, which bears a fertile tract, the lemma, and the floret consisting of palea, two lodicules, three stamens and the pistil. The lemma is completed by the awn, an appendage homologous to the laminae of normal leaves. Expressed in the inflorescences and lemmas and at lower levels, in palea and vascular bundles.

It localises to the nucleus. In terms of biological role, may play a role in meristem formation and/or maintenance. Overexpression causes the hooded phenotype characterized by the appearance of an extra flower of inverse polarity on the lemma. Binds to the DNA sequence 5'-TGAC-3'. This chain is Homeobox protein KNOX3 (KNOX3), found in Hordeum vulgare (Barley).